A 429-amino-acid chain; its full sequence is Glutamate-1-semialdehyde 2,1-aminomutase 2 (429 aa).

Lysine 267 bears the N6-(pyridoxal phosphate)lysine mark.

This sequence belongs to the class-III pyridoxal-phosphate-dependent aminotransferase family. HemL subfamily. Homodimer. Pyridoxal 5'-phosphate serves as cofactor.

It is found in the cytoplasm. The catalysed reaction is (S)-4-amino-5-oxopentanoate = 5-aminolevulinate. It participates in porphyrin-containing compound metabolism; protoporphyrin-IX biosynthesis; 5-aminolevulinate from L-glutamyl-tRNA(Glu): step 2/2. This is Glutamate-1-semialdehyde 2,1-aminomutase 2 from Brevibacillus brevis (strain 47 / JCM 6285 / NBRC 100599).